A 445-amino-acid chain; its full sequence is Phosphoglucosamine mutase (445 aa).

The active-site Phosphoserine intermediate is the Ser-102. Mg(2+)-binding residues include Ser-102, Asp-241, Asp-243, and Asp-245. The residue at position 102 (Ser-102) is a Phosphoserine.

The protein belongs to the phosphohexose mutase family. Mg(2+) is required as a cofactor. Post-translationally, activated by phosphorylation.

The catalysed reaction is alpha-D-glucosamine 1-phosphate = D-glucosamine 6-phosphate. In terms of biological role, catalyzes the conversion of glucosamine-6-phosphate to glucosamine-1-phosphate. This chain is Phosphoglucosamine mutase, found in Salmonella choleraesuis (strain SC-B67).